The sequence spans 567 residues: Oxygen-dependent choline dehydrogenase (567 aa).

Asp-4 to Glu-33 is a binding site for FAD. His-473 (proton acceptor) is an active-site residue.

The protein belongs to the GMC oxidoreductase family. It depends on FAD as a cofactor.

It catalyses the reaction choline + A = betaine aldehyde + AH2. The enzyme catalyses betaine aldehyde + NAD(+) + H2O = glycine betaine + NADH + 2 H(+). Its pathway is amine and polyamine biosynthesis; betaine biosynthesis via choline pathway; betaine aldehyde from choline (cytochrome c reductase route): step 1/1. In terms of biological role, involved in the biosynthesis of the osmoprotectant glycine betaine. Catalyzes the oxidation of choline to betaine aldehyde and betaine aldehyde to glycine betaine at the same rate. The polypeptide is Oxygen-dependent choline dehydrogenase (Yersinia pestis bv. Antiqua (strain Antiqua)).